The sequence spans 107 residues: Nucleoid-associated protein R00231 (107 aa).

The protein belongs to the YbaB/EbfC family. In terms of assembly, homodimer.

The protein localises to the cytoplasm. It is found in the nucleoid. In terms of biological role, binds to DNA and alters its conformation. May be involved in regulation of gene expression, nucleoid organization and DNA protection. The chain is Nucleoid-associated protein R00231 from Rhizobium meliloti (strain 1021) (Ensifer meliloti).